A 443-amino-acid chain; its full sequence is Pyrrolysine--tRNA ligase (443 aa).

The interval 103–177 is disordered; the sequence is VRKAMPKSVA…PAAPVPTSAP (75 aa). The span at 131-177 shows a compositional bias: low complexity; it reads PAPATPVSAPAQAPAPSTGSASATSASAQRMANSAAAPAAPVPTSAP.

The protein belongs to the class-II aminoacyl-tRNA synthetase family.

The protein localises to the cytoplasm. The catalysed reaction is tRNA(Pyl) + L-pyrrolysine + ATP = L-pyrrolysyl-tRNA(Pyl) + AMP + diphosphate. Its function is as follows. Catalyzes the attachment of pyrrolysine to tRNA(Pyl). Pyrrolysine is a lysine derivative encoded by the termination codon UAG. The chain is Pyrrolysine--tRNA ligase from Methanosarcina acetivorans (strain ATCC 35395 / DSM 2834 / JCM 12185 / C2A).